Reading from the N-terminus, the 90-residue chain is Probable Fe(2+)-trafficking protein (90 aa).

This sequence belongs to the Fe(2+)-trafficking protein family. As to quaternary structure, monomer.

Its function is as follows. Could be a mediator in iron transactions between iron acquisition and iron-requiring processes, such as synthesis and/or repair of Fe-S clusters in biosynthetic enzymes. This Enterobacter sp. (strain 638) protein is Probable Fe(2+)-trafficking protein.